A 427-amino-acid polypeptide reads, in one-letter code: MRHLGAFLFLLGVLGALTEMCEIPEMDSHLVEKLGQHLLPWMDRLSLEHLNPSIYVGLRLSSLQAGTKEDLYLHSLKLGYQQCLLGSAFSEDDGDCQGKPSMGQLALYLLALRANCEFVRGHKGDRLVSQLKWFLEDEKRAIGHDHKGHPHTSYYQYGLGILALCLHQKRVHDSVVDKLLYAVEPFHQGHHSVDTAAMAGLAFTCLKRSNFNPGRRQRITMAIRTVREEILKAQTPEGHFGNVYSTPLALQFLMTSPMRGAELGTACLKARVALLASLQDGAFQNALMISQLLPVLNHKTYIDLIFPDCLAPRVMLEPAAETIPQTQEIISVTLQVLSLLPPYRQSISVLAGSTVEDVLKKAHELGGFTYETQASLSGPYLTSVMGKAAGEREFWQLLRDPNTPLLQGIADYRPKDGETIELRLVSW.

An N-terminal signal peptide occupies residues 1–18 (MRHLGAFLFLLGVLGALT). Disulfide bonds link C21-C267, C83-C96, C116-C309, and C165-C205. Residues Q104, 152-156 (TSYYQ), H190, 190-194 (HHSVD), N242, S245, Q291, and 395-397 (WQL) contribute to the cob(II)alamin site.

It belongs to the eukaryotic cobalamin transport proteins family. Interacts with CD320 (via LDL-receptor class A domains).

The protein localises to the secreted. Its function is as follows. Primary vitamin B12-binding and transport protein. Delivers cobalamin to cells. The chain is Transcobalamin-2 (TCN2) from Homo sapiens (Human).